Reading from the N-terminus, the 498-residue chain is MNKGYVLALDQGTTSSRAILFNRDGRLVGQVNHEFRQIYPQPGWVEHDPREIWSTQLRAVQDVLARTGVRLSEVAAIGITNQRETTVVWDAETGEPVYNAIVWQCRRTAPICAELAARGWAPRIREKTGLVIDAYFSGTKVKWILDNVPGVREKAEQGRLRFGTIDAWLIWNLTGGRVHATDYSNASRTMLFNIHQLAWDEEILHELGIPASLLPRALPSSHVYGETDPAVLGAAIPIAGVAGDQQAALFGQACFQPGDAKNTYGTGCFMLMNTGDRAVPSESGLLTTIAWGIGDRVEYALEGSIFIGGAAVQWLRDELRFFDRAADSEALALSVPDSGGVYVVPAFVGLGAPYWDMYARGIVVGLTRGTGRAHITRATLESIAYQTRDVLGAMEKDSGIRLNRLKVDGGAVANNFLMQFQSDILGVPVERPKIAETTALGAAYLAGLATGFWRSQAELADKWALDRGFTPALPAEERERLYAGWRRAVERARGWAAE.

Position 13 (threonine 13) interacts with ADP. 3 residues coordinate ATP: threonine 13, threonine 14, and serine 15. A sn-glycerol 3-phosphate-binding site is contributed by threonine 13. Arginine 17 contributes to the ADP binding site. Sn-glycerol 3-phosphate-binding residues include arginine 83, glutamate 84, tyrosine 135, and aspartate 244. Glycerol is bound by residues arginine 83, glutamate 84, tyrosine 135, aspartate 244, and glutamine 245. ADP contacts are provided by threonine 266 and glycine 309. Positions 266, 309, 313, and 410 each coordinate ATP. ADP is bound by residues glycine 410 and asparagine 414.

Belongs to the FGGY kinase family. In terms of assembly, homotetramer and homodimer (in equilibrium).

The catalysed reaction is glycerol + ATP = sn-glycerol 3-phosphate + ADP + H(+). It participates in polyol metabolism; glycerol degradation via glycerol kinase pathway; sn-glycerol 3-phosphate from glycerol: step 1/1. Activated by phosphorylation and inhibited by fructose 1,6-bisphosphate (FBP). Functionally, key enzyme in the regulation of glycerol uptake and metabolism. Catalyzes the phosphorylation of glycerol to yield sn-glycerol 3-phosphate. In Symbiobacterium thermophilum (strain DSM 24528 / JCM 14929 / IAM 14863 / T), this protein is Glycerol kinase.